Consider the following 144-residue polypeptide: D-aminoacyl-tRNA deacylase (144 aa).

Positions 136 to 137 (GP) match the Gly-cisPro motif, important for rejection of L-amino acids motif.

The protein belongs to the DTD family. Homodimer.

Its subcellular location is the cytoplasm. It carries out the reaction glycyl-tRNA(Ala) + H2O = tRNA(Ala) + glycine + H(+). The catalysed reaction is a D-aminoacyl-tRNA + H2O = a tRNA + a D-alpha-amino acid + H(+). An aminoacyl-tRNA editing enzyme that deacylates mischarged D-aminoacyl-tRNAs. Also deacylates mischarged glycyl-tRNA(Ala), protecting cells against glycine mischarging by AlaRS. Acts via tRNA-based rather than protein-based catalysis; rejects L-amino acids rather than detecting D-amino acids in the active site. By recycling D-aminoacyl-tRNA to D-amino acids and free tRNA molecules, this enzyme counteracts the toxicity associated with the formation of D-aminoacyl-tRNA entities in vivo and helps enforce protein L-homochirality. The protein is D-aminoacyl-tRNA deacylase of Haemophilus influenzae (strain ATCC 51907 / DSM 11121 / KW20 / Rd).